The primary structure comprises 128 residues: Probable 4-amino-4-deoxy-L-arabinose-phosphoundecaprenol flippase subunit ArnF (128 aa).

Over 1–2 the chain is Cytoplasmic; the sequence is MG. A helical transmembrane segment spans residues 3–23; it reads LMWGLFSVIIASAAQLSLGFA. At 24-32 the chain is on the periplasmic side; sequence ASHLPPMTH. The chain crosses the membrane as a helical span at residues 33–53; sequence LWDFIAALLAFGLDARILLLG. At 54-76 the chain is on the cytoplasmic side; the sequence is LQGYLLSVFCWYKTLHKLALSKA. The chain crosses the membrane as a helical span at residues 77-97; it reads YALLSMSYVLVWIASMVLPGW. Residues 98 to 100 lie on the Periplasmic side of the membrane; it reads EGT. Residues 101–121 traverse the membrane as a helical segment; it reads FSLKALLGVACIMSGLMLIFL. The Cytoplasmic segment spans residues 122-128; that stretch reads PTTKQRY.

The protein belongs to the ArnF family. Heterodimer of ArnE and ArnF.

It is found in the cell inner membrane. It participates in bacterial outer membrane biogenesis; lipopolysaccharide biosynthesis. Its function is as follows. Translocates 4-amino-4-deoxy-L-arabinose-phosphoundecaprenol (alpha-L-Ara4N-phosphoundecaprenol) from the cytoplasmic to the periplasmic side of the inner membrane. The chain is Probable 4-amino-4-deoxy-L-arabinose-phosphoundecaprenol flippase subunit ArnF from Escherichia coli O7:K1 (strain IAI39 / ExPEC).